The sequence spans 192 residues: Imidazoleglycerol-phosphate dehydratase (192 aa).

This sequence belongs to the imidazoleglycerol-phosphate dehydratase family.

It localises to the cytoplasm. The catalysed reaction is D-erythro-1-(imidazol-4-yl)glycerol 3-phosphate = 3-(imidazol-4-yl)-2-oxopropyl phosphate + H2O. It participates in amino-acid biosynthesis; L-histidine biosynthesis; L-histidine from 5-phospho-alpha-D-ribose 1-diphosphate: step 6/9. This is Imidazoleglycerol-phosphate dehydratase from Staphylococcus aureus (strain JH9).